The chain runs to 434 residues: Cobyrinate a,c-diamide synthase (434 aa).

Residues Lys-239–Leu-430 enclose the GATase cobBQ-type domain. The Nucleophile role is filled by Cys-320.

Belongs to the CobB/CbiA family. Mg(2+) is required as a cofactor.

The enzyme catalyses cob(II)yrinate + 2 L-glutamine + 2 ATP + 2 H2O = cob(II)yrinate a,c diamide + 2 L-glutamate + 2 ADP + 2 phosphate + 2 H(+). It participates in cofactor biosynthesis; adenosylcobalamin biosynthesis; cob(II)yrinate a,c-diamide from sirohydrochlorin (anaerobic route): step 10/10. Its function is as follows. Catalyzes the ATP-dependent amidation of the two carboxylate groups at positions a and c of cobyrinate, using either L-glutamine or ammonia as the nitrogen source. This Saccharolobus solfataricus (strain ATCC 35092 / DSM 1617 / JCM 11322 / P2) (Sulfolobus solfataricus) protein is Cobyrinate a,c-diamide synthase.